The sequence spans 347 residues: S-adenosylmethionine:tRNA ribosyltransferase-isomerase (347 aa).

The protein belongs to the QueA family. In terms of assembly, monomer.

Its subcellular location is the cytoplasm. The catalysed reaction is 7-aminomethyl-7-carbaguanosine(34) in tRNA + S-adenosyl-L-methionine = epoxyqueuosine(34) in tRNA + adenine + L-methionine + 2 H(+). Its pathway is tRNA modification; tRNA-queuosine biosynthesis. Transfers and isomerizes the ribose moiety from AdoMet to the 7-aminomethyl group of 7-deazaguanine (preQ1-tRNA) to give epoxyqueuosine (oQ-tRNA). This is S-adenosylmethionine:tRNA ribosyltransferase-isomerase from Bordetella parapertussis (strain 12822 / ATCC BAA-587 / NCTC 13253).